The primary structure comprises 828 residues: Periplasmic nitrate reductase 1 (828 aa).

Positions 1–30 (MKMTRRAFVKANAAASAAAVAGITLPASAA) form a signal peptide, tat-type signal. One can recognise a 4Fe-4S Mo/W bis-MGD-type domain in the interval 41–97 (IKWDKAPCRFCGTGCSVLVGTQNGRVVATQGDPEAPVNKGLNCIKGYFLSKIMYGKD). Residues Cys48, Cys51, Cys55, and Cys83 each coordinate [4Fe-4S] cluster. Mo-bis(molybdopterin guanine dinucleotide) contacts are provided by residues Lys85, Gln152, Asn177, Cys181, 214–221 (WGSNMAEM), 245–249 (STYYH), 264–266 (QTD), Met374, Gln378, Asn484, 510–511 (SD), Lys533, Asp560, and 718–727 (TGRVLEHWHT). Phe794 contacts substrate. Mo-bis(molybdopterin guanine dinucleotide)-binding residues include Asn802 and Lys819.

This sequence belongs to the prokaryotic molybdopterin-containing oxidoreductase family. NasA/NapA/NarB subfamily. In terms of assembly, component of the periplasmic nitrate reductase NapAB complex composed of NapA and NapB. The cofactor is [4Fe-4S] cluster. Requires Mo-bis(molybdopterin guanine dinucleotide) as cofactor. In terms of processing, predicted to be exported by the Tat system. The position of the signal peptide cleavage has not been experimentally proven.

It localises to the periplasm. It carries out the reaction 2 Fe(II)-[cytochrome] + nitrate + 2 H(+) = 2 Fe(III)-[cytochrome] + nitrite + H2O. Its function is as follows. Catalytic subunit of the periplasmic nitrate reductase complex NapAB. Receives electrons from NapB and catalyzes the reduction of nitrate to nitrite. The polypeptide is Periplasmic nitrate reductase 1 (Photobacterium profundum (strain SS9)).